Here is a 214-residue protein sequence, read N- to C-terminus: Protein verrocchio (214 aa).

In terms of assembly, probably homomultimerizes. Component of the MTV complex, composed of moi/modigliani, tea and ver/verrocchio. Interacts with moi/modigliani and tea (via C-terminus); the interactions are direct and require fully intact moi/modigliani and ver/verrocchio. The MTV complex is recruited to telomeres by the HipHop-HOAP complex, consisting of HipHop, cav/HOAP and Su(var)205/HP1 to form the terminin telomere-capping complex. Interacts with cav/HOAP; the interaction is direct. Interacts with Su(var)205/HP1; the interaction is indirect and probably requires cav/HOAP or moi/modigliani. Probably interacts with peo (via N-terminus and UBC domain).

It localises to the nucleus. The protein resides in the chromosome. The protein localises to the telomere. Its function is as follows. Part of the MTV complex that associates with the HipHop-HOAP complex to form the terminin telomere-capping complex involved in telomere maintenance and prevention of telomere fusion. As part of the MTV complex binds single stranded DNA in a sequence-independent manner, protecting it from degradation. This Drosophila melanogaster (Fruit fly) protein is Protein verrocchio.